The chain runs to 1047 residues: MALPSLLLVVAALAGGVRPPGARNLTLAVVLPEHNLSYAWAWPRVGPAVALAVEALGRALPVDLRFVSSELDGACSEYLAPLRAVDLKLYHDPDLLLGPGCVYPAASVARFASHWHLPLLTAGAVASGFAAKNEHYRTLVRTGPSAPKLGEFVVTLHGHFNWTARAALLYLDARTDDRPHYFTIEGVFEALQGSNLSVQHQVYTREPGGPEQATHFIRANGRIVYICGPLEMLHEILLQAQRENLTNGDYVFFYLDVFGESLRAGPTRATGRPWQDNRTQEQAQALREAFQTVLVITYREPPNPEYQEFQNRLLIRAREDFGVELAPSLMNLIAGCFYDGILLYAQVLNETIQEGGTREDGLRIVEKMQGRRYHGVTGLVVMDKNNDRETDFVLWAMGDLESGDFQPAAHYSGAEKQIWWTGRPIPWVKGAPPLDNPPCAFDLDDPSCDKTPLSTLAIVALGTGITFIMFGVSSFLIFRKLMLEKELASMLWRIRWEELQFGNSDRYHKGAGSRLTLSLRGSSYGSLMTAHGKYQIFANTGHFKGNVVAIKHVNKKRIELTRQVLFELKHMRDVQFNHLTRFIGACIDPPNICIVTEYCPRGSLQDILENDSINLDWMFRYSLINDLVKGMAFLHNSIISSHGSLKSSNCVVDSRFVLKITDYGLASFRSTAEPDDSHALYAKKLWTAPELLSGNPLPTTGMQKADVYSFAIILQEIALRSGPFYLEGLDLSPKEIVQKVRNGQRPYFRPSIDRTQLNEELVLLMERCWAQDPTERPDFGQIKGFIRRFNKEGGTSILDNLLLRMEQYANNLEKLVEERTQAYLEEKRKAEALLYQILPHSVAEQLKRGETVQAEAFDSVTIYFSDIVGFTALSAESTPMQVVTLLNDLYTCFDAIIDNFDVYKVETIGDAYMVVSGLPGRNGQRHAPEIARMALALLDAVSSFRIRHRPHDQLRLRIGVHTGPVCAGVVGLKMPRYCLFGDTVNTASRMESNGQALKIHVSSTTKDALDELGCFQLELRGDVEMKGKGKMRTYWLLGERKGPPGLL.

An N-terminal signal peptide occupies residues 1–16 (MALPSLLLVVAALAGG). At 17–458 (VRPPGARNLT…DKTPLSTLAI (442 aa)) the chain is on the extracellular side. N-linked (GlcNAc...) asparagine glycosylation is found at Asn-24 and Asn-35. Cysteines 75 and 101 form a disulfide. Asn-161, Asn-195, Asn-244, Asn-277, and Asn-349 each carry an N-linked (GlcNAc...) asparagine glycan. A helical transmembrane segment spans residues 459-478 (VALGTGITFIMFGVSSFLIF). At 479–1047 (RKLMLEKELA…GERKGPPGLL (569 aa)) the chain is on the cytoplasmic side. Ser-513 bears the Phosphoserine mark. The 274-residue stretch at 513–786 (SRLTLSLRGS…PDFGQIKGFI (274 aa)) folds into the Protein kinase domain. Thr-516 is modified (phosphothreonine). 4 positions are modified to phosphoserine: Ser-518, Ser-522, Ser-523, and Ser-526. Residue Thr-529 is modified to Phosphothreonine. The Guanylate cyclase domain occupies 861–991 (TIYFSDIVGF…DTVNTASRME (131 aa)).

The protein belongs to the adenylyl cyclase class-4/guanylyl cyclase family. Phosphorylated. Phosphorylation of the protein kinase-like domain is required for full activation by CNP. Post-translationally, glycosylated.

It localises to the cell membrane. It catalyses the reaction GTP = 3',5'-cyclic GMP + diphosphate. Its function is as follows. Receptor for the C-type natriuretic peptide NPPC/CNP hormone. Has guanylate cyclase activity upon binding of its ligand. May play a role in the regulation of skeletal growth. This Rattus norvegicus (Rat) protein is Atrial natriuretic peptide receptor 2 (Npr2).